The sequence spans 75 residues: Carwaprin-a (75 aa).

The N-terminal stretch at 1–24 is a signal peptide; it reads MSSGGLLLLLGLLTLWAELTPISG. Residues 27–72 enclose the WAP domain; it reads RPKKPGLCPPRPQKPPCVRECKNDWRCPGEQKCCRYGCIYECRDPI. 4 disulfide bridges follow: Cys34–Cys60, Cys43–Cys64, Cys47–Cys59, and Cys53–Cys68.

The protein belongs to the venom waprin family. Expressed by the venom gland.

Its subcellular location is the secreted. Its function is as follows. Damages membranes of susceptible bacteria. Has no hemolytic activity. Not toxic to mice. Does not inhibit the proteinases elastase and cathepsin G. The sequence is that of Carwaprin-a from Tropidechis carinatus (Australian rough-scaled snake).